Reading from the N-terminus, the 310-residue chain is U-megalopygitoxin(8)-Mo15 (310 aa).

The first 27 residues, 1–27 (MARFSSKNLTKLFQYLVLSLLSPVAFG), serve as a signal peptide directing secretion.

The protein belongs to the megalysin family. Contains 3 disulfide bonds. In terms of tissue distribution, expressed by the venom apparatus.

The protein localises to the secreted. The protein resides in the target cell membrane. Functionally, may function as a large pore-forming protein. The chain is U-megalopygitoxin(8)-Mo15 from Megalopyge opercularis (Southern flannel moth).